The chain runs to 154 residues: 6,7-dimethyl-8-ribityllumazine synthase (154 aa).

5-amino-6-(D-ribitylamino)uracil-binding positions include tryptophan 22, 56–58, and 80–82; these read AWE and CVI. (2S)-2-hydroxy-3-oxobutyl phosphate is bound at residue 85-86; the sequence is DT. Residue histidine 88 is the Proton donor of the active site. Asparagine 113 contributes to the 5-amino-6-(D-ribitylamino)uracil binding site. Arginine 127 contributes to the (2S)-2-hydroxy-3-oxobutyl phosphate binding site.

It belongs to the DMRL synthase family. In terms of assembly, forms an icosahedral capsid composed of 60 subunits, arranged as a dodecamer of pentamers.

It carries out the reaction (2S)-2-hydroxy-3-oxobutyl phosphate + 5-amino-6-(D-ribitylamino)uracil = 6,7-dimethyl-8-(1-D-ribityl)lumazine + phosphate + 2 H2O + H(+). The protein operates within cofactor biosynthesis; riboflavin biosynthesis; riboflavin from 2-hydroxy-3-oxobutyl phosphate and 5-amino-6-(D-ribitylamino)uracil: step 1/2. Functionally, catalyzes the formation of 6,7-dimethyl-8-ribityllumazine by condensation of 5-amino-6-(D-ribitylamino)uracil with 3,4-dihydroxy-2-butanone 4-phosphate. This is the penultimate step in the biosynthesis of riboflavin. The chain is 6,7-dimethyl-8-ribityllumazine synthase from Xanthomonas oryzae pv. oryzae (strain MAFF 311018).